The chain runs to 549 residues: Glucose-6-phosphate isomerase (549 aa).

E355 functions as the Proton donor in the catalytic mechanism. Residues H386 and K514 contribute to the active site.

It belongs to the GPI family.

It localises to the cytoplasm. The enzyme catalyses alpha-D-glucose 6-phosphate = beta-D-fructose 6-phosphate. The protein operates within carbohydrate biosynthesis; gluconeogenesis. It functions in the pathway carbohydrate degradation; glycolysis; D-glyceraldehyde 3-phosphate and glycerone phosphate from D-glucose: step 2/4. In terms of biological role, catalyzes the reversible isomerization of glucose-6-phosphate to fructose-6-phosphate. This Buchnera aphidicola subsp. Acyrthosiphon pisum (strain APS) (Acyrthosiphon pisum symbiotic bacterium) protein is Glucose-6-phosphate isomerase.